Consider the following 487-residue polypeptide: Aspartyl/glutamyl-tRNA(Asn/Gln) amidotransferase subunit B (487 aa).

It belongs to the GatB/GatE family. GatB subfamily. Heterotrimer of A, B and C subunits.

It carries out the reaction L-glutamyl-tRNA(Gln) + L-glutamine + ATP + H2O = L-glutaminyl-tRNA(Gln) + L-glutamate + ADP + phosphate + H(+). It catalyses the reaction L-aspartyl-tRNA(Asn) + L-glutamine + ATP + H2O = L-asparaginyl-tRNA(Asn) + L-glutamate + ADP + phosphate + 2 H(+). Allows the formation of correctly charged Asn-tRNA(Asn) or Gln-tRNA(Gln) through the transamidation of misacylated Asp-tRNA(Asn) or Glu-tRNA(Gln) in organisms which lack either or both of asparaginyl-tRNA or glutaminyl-tRNA synthetases. The reaction takes place in the presence of glutamine and ATP through an activated phospho-Asp-tRNA(Asn) or phospho-Glu-tRNA(Gln). The sequence is that of Aspartyl/glutamyl-tRNA(Asn/Gln) amidotransferase subunit B from Chlamydia caviae (strain ATCC VR-813 / DSM 19441 / 03DC25 / GPIC) (Chlamydophila caviae).